Consider the following 221-residue polypeptide: Pleckstrin homology domain-containing family B member 2 (221 aa).

The 108-residue stretch at 2–109 folds into the PH domain; the sequence is AFVKSGWLLR…WKFTLQDSRT (108 aa). Lys-20 lines the a 1,2-diacyl-sn-glycero-3-phospho-L-serine pocket.

As to expression, highly expressed in brain, retina, heart and kidney. Detected at lower levels in lung, muscle and nerve.

The protein resides in the recycling endosome membrane. Functionally, involved in retrograde transport of recycling endosomes. The polypeptide is Pleckstrin homology domain-containing family B member 2 (Plekhb2) (Mus musculus (Mouse)).